A 519-amino-acid polypeptide reads, in one-letter code: 4-nitrophenol 2-monooxygenase, oxygenase component (519 aa).

The protein belongs to the FADH(2)-utilizing monooxygenase family. As to quaternary structure, homotetramer. 4-nitrophenol 2-monooxygenase complex consists of an oxygenase component NphA1 and a flavin reductase component NphA2. Requires FAD as cofactor.

It carries out the reaction 4-nitrophenol + NADH + O2 + H(+) = 4-nitrocatechol + NAD(+) + H2O. With respect to regulation, partially inhibited by concentrations of FAD above 10 uM and completely inhibited by concentrations above 50 uM. In terms of biological role, utilizes the flavins supplied by NphA2 to catalyze the degradation of 4-nitrophenol (4-NP) via 4-nitrocatechol (4-NC) which is used as the sole carbon, nitrogen, and energy source. Can also degrade phenol and 4-chlorophenol as rapidly as 4-NP. The sequence is that of 4-nitrophenol 2-monooxygenase, oxygenase component (nphA1) from Rhodococcus sp.